A 119-amino-acid chain; its full sequence is Insulin growth factor-like family member 2 (119 aa).

The first 25 residues, 1–25, serve as a signal peptide directing secretion; that stretch reads MVPRIFAPAYVSVCLLLLCPREVIA.

The protein belongs to the IGFL family. In terms of tissue distribution, detected in cerebellum, heart, placenta, spleen, stomach, testis and thymus.

It is found in the secreted. Potential ligand of the IGFLR1 cell membrane receptor. In Homo sapiens (Human), this protein is Insulin growth factor-like family member 2 (IGFL2).